The chain runs to 247 residues: 3-deoxy-manno-octulosonate cytidylyltransferase (247 aa).

Belongs to the KdsB family.

It is found in the cytoplasm. The enzyme catalyses 3-deoxy-alpha-D-manno-oct-2-ulosonate + CTP = CMP-3-deoxy-beta-D-manno-octulosonate + diphosphate. The protein operates within nucleotide-sugar biosynthesis; CMP-3-deoxy-D-manno-octulosonate biosynthesis; CMP-3-deoxy-D-manno-octulosonate from 3-deoxy-D-manno-octulosonate and CTP: step 1/1. It participates in bacterial outer membrane biogenesis; lipopolysaccharide biosynthesis. Functionally, activates KDO (a required 8-carbon sugar) for incorporation into bacterial lipopolysaccharide in Gram-negative bacteria. In Afipia carboxidovorans (strain ATCC 49405 / DSM 1227 / KCTC 32145 / OM5) (Oligotropha carboxidovorans), this protein is 3-deoxy-manno-octulosonate cytidylyltransferase.